The sequence spans 246 residues: Complement C1q tumor necrosis factor-related protein 3 (246 aa).

The first 22 residues, 1 to 22 (MLWRQLIYWQLLALFFLPFCLC), serve as a signal peptide directing secretion. The Collagen-like domain occupies 51–113 (GYQGPPGPPG…KGEKGYPGIP (63 aa)). The tract at residues 53–110 (QGPPGPPGPPGIPGNHGNNGNNGATGHEGAKGEKGDKGDLGPRGERGQHGPKGEKGYP) is disordered. Pro residues predominate over residues 55–64 (PPGPPGPPGI). Residues 65–74 (PGNHGNNGNN) show a composition bias toward low complexity. The N-linked (GlcNAc...) asparagine glycan is linked to asparagine 70. Residues 80–107 (EGAKGEKGDKGDLGPRGERGQHGPKGEK) show a composition bias toward basic and acidic residues. One can recognise a C1q domain in the interval 113-246 (PPELQIAFMA…FAGFLLFETK (134 aa)).

Post-translationally, glycosylated on Asn-70. Expressed in colon and small intestine.

The protein resides in the secreted. The protein is Complement C1q tumor necrosis factor-related protein 3 (C1QTNF3) of Homo sapiens (Human).